Reading from the N-terminus, the 195-residue chain is Imidazoleglycerol-phosphate dehydratase (195 aa).

It belongs to the imidazoleglycerol-phosphate dehydratase family.

The protein resides in the cytoplasm. The catalysed reaction is D-erythro-1-(imidazol-4-yl)glycerol 3-phosphate = 3-(imidazol-4-yl)-2-oxopropyl phosphate + H2O. Its pathway is amino-acid biosynthesis; L-histidine biosynthesis; L-histidine from 5-phospho-alpha-D-ribose 1-diphosphate: step 6/9. The chain is Imidazoleglycerol-phosphate dehydratase from Burkholderia cenocepacia (strain ATCC BAA-245 / DSM 16553 / LMG 16656 / NCTC 13227 / J2315 / CF5610) (Burkholderia cepacia (strain J2315)).